The sequence spans 258 residues: Adenylate kinase (258 aa).

52–57 (GAGKGT) contributes to the ATP binding site. Residues 72–101 (ATGDMLRSQVAKKTELGKEAKKIMDQGGLV) form an NMP region. Residues threonine 73, arginine 78, 99 to 101 (GLV), 128 to 131 (GFPR), and glutamine 135 contribute to the AMP site. The segment at 169–206 (GRLVHPASGRSYHKVFNPPKQEMKDDITGEPLIQRSDD) is LID. Residues arginine 170 and 179-180 (SY) contribute to the ATP site. AMP-binding residues include arginine 203 and arginine 214. An ATP-binding site is contributed by glutamine 242.

The protein belongs to the adenylate kinase family. AK2 subfamily. In terms of assembly, monomer.

It localises to the cytoplasm. It is found in the cytosol. Its subcellular location is the mitochondrion intermembrane space. The enzyme catalyses AMP + ATP = 2 ADP. Catalyzes the reversible transfer of the terminal phosphate group between ATP and AMP. Plays an important role in cellular energy homeostasis and in adenine nucleotide metabolism. Adenylate kinase activity is critical for regulation of the phosphate utilization and the AMP de novo biosynthesis pathways. The sequence is that of Adenylate kinase (adk1) from Aspergillus oryzae (strain ATCC 42149 / RIB 40) (Yellow koji mold).